The primary structure comprises 58 residues: Single-pass membrane and coiled-coil domain-containing protein 4 homolog (58 aa).

A coiled-coil region spans residues methionine 1–threonine 31. A helical transmembrane segment spans residues threonine 31–lysine 51.

It belongs to the SMCO4 family.

It localises to the membrane. The sequence is that of Single-pass membrane and coiled-coil domain-containing protein 4 homolog from Drosophila melanogaster (Fruit fly).